Reading from the N-terminus, the 357-residue chain is MRIIITGGGTGGHIYPALAFLKYLEKVEPDTEVLYIGTKKGLEAKIVPQAGIKLKTVDIQGLRRSLSPQNLKTAYKFFKSVSDAKKIMKEFKPDVVLGTGGYVAGPVVYAAAQLKIPTIIHEGNSFPGITNRFLAKKVDRIAVGFHAAEQYFPASKTTFTGNPRAQEVADAAAQVEKFEEPTVVIFGGSRGALKLNNAFIEALPELAQRSFKTVYASGEIYYDDYKETFNQYKENSNLDIRPYINNMTELLAKSQLFLGRSGSTTIAEVTALGLPAVYVPSPNVTADQQTKNAQEYVDQGAAIIIKDEDLTGQTLVEAISNILENNEKYQEMQAASLKAGVPDASQRLYNLVKEISK.

Residues 10-12 (TGG), Asn-124, Ser-189, Ile-244, and Gln-289 contribute to the UDP-N-acetyl-alpha-D-glucosamine site.

This sequence belongs to the glycosyltransferase 28 family. MurG subfamily.

The protein resides in the cell membrane. The enzyme catalyses Mur2Ac(oyl-L-Ala-gamma-D-Glu-L-Lys-D-Ala-D-Ala)-di-trans,octa-cis-undecaprenyl diphosphate + UDP-N-acetyl-alpha-D-glucosamine = beta-D-GlcNAc-(1-&gt;4)-Mur2Ac(oyl-L-Ala-gamma-D-Glu-L-Lys-D-Ala-D-Ala)-di-trans,octa-cis-undecaprenyl diphosphate + UDP + H(+). The protein operates within cell wall biogenesis; peptidoglycan biosynthesis. In terms of biological role, cell wall formation. Catalyzes the transfer of a GlcNAc subunit on undecaprenyl-pyrophosphoryl-MurNAc-pentapeptide (lipid intermediate I) to form undecaprenyl-pyrophosphoryl-MurNAc-(pentapeptide)GlcNAc (lipid intermediate II). In Lactococcus lactis subsp. lactis (strain IL1403) (Streptococcus lactis), this protein is UDP-N-acetylglucosamine--N-acetylmuramyl-(pentapeptide) pyrophosphoryl-undecaprenol N-acetylglucosamine transferase.